The primary structure comprises 937 residues: Isoleucine--tRNA ligase (937 aa).

A 'HIGH' region motif is present at residues 58–68 (PYANGTLHLGH). Glu561 is a binding site for L-isoleucyl-5'-AMP. Residues 602 to 606 (KMSKS) carry the 'KMSKS' region motif. Residue Lys605 participates in ATP binding. Residues Cys900, Cys903, Cys920, and Cys923 each contribute to the Zn(2+) site.

Belongs to the class-I aminoacyl-tRNA synthetase family. IleS type 1 subfamily. In terms of assembly, monomer. The cofactor is Zn(2+).

It is found in the cytoplasm. It carries out the reaction tRNA(Ile) + L-isoleucine + ATP = L-isoleucyl-tRNA(Ile) + AMP + diphosphate. Its function is as follows. Catalyzes the attachment of isoleucine to tRNA(Ile). As IleRS can inadvertently accommodate and process structurally similar amino acids such as valine, to avoid such errors it has two additional distinct tRNA(Ile)-dependent editing activities. One activity is designated as 'pretransfer' editing and involves the hydrolysis of activated Val-AMP. The other activity is designated 'posttransfer' editing and involves deacylation of mischarged Val-tRNA(Ile). The protein is Isoleucine--tRNA ligase of Histophilus somni (strain 2336) (Haemophilus somnus).